Here is a 305-residue protein sequence, read N- to C-terminus: Protoheme IX farnesyltransferase (305 aa).

9 consecutive transmembrane segments (helical) span residues 31 to 51 (IQVL…KGHV), 53 to 73 (PLLL…ANAF), 98 to 118 (ILPW…FAVL), 124 to 144 (LFAA…YTLW), 153 to 173 (IVIG…AVTG), 181 to 201 (VLFG…AMMI), 221 to 241 (ATAR…LVLY), 242 to 262 (PLGT…LWLI), and 285 to 305 (SIFY…FLFA).

This sequence belongs to the UbiA prenyltransferase family. Protoheme IX farnesyltransferase subfamily.

The protein localises to the cell inner membrane. It catalyses the reaction heme b + (2E,6E)-farnesyl diphosphate + H2O = Fe(II)-heme o + diphosphate. It functions in the pathway porphyrin-containing compound metabolism; heme O biosynthesis; heme O from protoheme: step 1/1. Converts heme B (protoheme IX) to heme O by substitution of the vinyl group on carbon 2 of heme B porphyrin ring with a hydroxyethyl farnesyl side group. This is Protoheme IX farnesyltransferase from Gloeobacter violaceus (strain ATCC 29082 / PCC 7421).